A 239-amino-acid chain; its full sequence is Transcriptional regulatory protein BtsR (239 aa).

Positions 3 to 116 (KVLIVDDEPL…RLEKTLHRLR (114 aa)) constitute a Response regulatory domain. Position 54 is a 4-aspartylphosphate (aspartate 54). Residues 137–239 (IPCTGHSRIY…LKSLKEAIGL (103 aa)) form the HTH LytTR-type domain.

In terms of processing, phosphorylated by BtsS.

Its function is as follows. Member of the two-component regulatory system BtsS/BtsR. BtsR regulates expression of btsT by binding to its promoter region. The chain is Transcriptional regulatory protein BtsR from Salmonella typhimurium (strain LT2 / SGSC1412 / ATCC 700720).